The primary structure comprises 361 residues: Chorismate synthase (361 aa).

The NADP(+) site is built by arginine 48 and arginine 54. Residues 125-127, 238-239, glycine 278, 293-297, and arginine 319 each bind FMN; these read RSS, NA, and KPTSS.

It belongs to the chorismate synthase family. Homotetramer. FMNH2 serves as cofactor.

It carries out the reaction 5-O-(1-carboxyvinyl)-3-phosphoshikimate = chorismate + phosphate. It functions in the pathway metabolic intermediate biosynthesis; chorismate biosynthesis; chorismate from D-erythrose 4-phosphate and phosphoenolpyruvate: step 7/7. Functionally, catalyzes the anti-1,4-elimination of the C-3 phosphate and the C-6 proR hydrogen from 5-enolpyruvylshikimate-3-phosphate (EPSP) to yield chorismate, which is the branch point compound that serves as the starting substrate for the three terminal pathways of aromatic amino acid biosynthesis. This reaction introduces a second double bond into the aromatic ring system. The polypeptide is Chorismate synthase (Pectobacterium atrosepticum (strain SCRI 1043 / ATCC BAA-672) (Erwinia carotovora subsp. atroseptica)).